We begin with the raw amino-acid sequence, 165 residues long: Secreted acidic protein 2 (165 aa).

Composition is skewed to acidic residues over residues 1 to 58 and 80 to 102; these read WSXS…DDSG and ESSD…DAYN. The tract at residues 1–112 is disordered; that stretch reads WSXSGDDDDD…DDSQAGELNS (112 aa). The segment covering 103–112 has biased composition (polar residues); it reads DDSQAGELNS.

Component of the acid-insoluble and acid-soluble organic matrix of the aragonitic skeleton (at protein level).

It is found in the secreted. This is Secreted acidic protein 2 from Acropora millepora (Staghorn coral).